Here is a 226-residue protein sequence, read N- to C-terminus: Putative type II restriction enzyme MjaVIP (226 aa).

This sequence belongs to the BsaWI type II restriction endonuclease family.

The enzyme catalyses Endonucleolytic cleavage of DNA to give specific double-stranded fragments with terminal 5'-phosphates.. Its function is as follows. A P subtype restriction enzyme that recognizes the double-stranded sequence 5'-CCGG-3'; the cleavage site is unknown. The protein is Putative type II restriction enzyme MjaVIP (mjaVIRP) of Methanocaldococcus jannaschii (strain ATCC 43067 / DSM 2661 / JAL-1 / JCM 10045 / NBRC 100440) (Methanococcus jannaschii).